The primary structure comprises 132 residues: Large ribosomal subunit protein bL17 (132 aa).

The protein belongs to the bacterial ribosomal protein bL17 family. Part of the 50S ribosomal subunit. Contacts protein L32.

This chain is Large ribosomal subunit protein bL17, found in Ralstonia pickettii (strain 12J).